A 460-amino-acid chain; its full sequence is Flavin-containing monooxygenase FMO GS-OX-like 9 (460 aa).

20–25 (GAGPAG) contributes to the FAD binding site. Position 222 to 227 (222 to 227 (GNSMSG)) interacts with NADP(+).

It belongs to the FMO family. It depends on FAD as a cofactor.

Its function is as follows. Catalyzes the conversion of methylthioalkyl glucosinolates of any chain length into methylsulfinylalkyl glucosinolates. This is Flavin-containing monooxygenase FMO GS-OX-like 9 from Arabidopsis thaliana (Mouse-ear cress).